Here is a 290-residue protein sequence, read N- to C-terminus: Nucleotide-binding protein LAR_0375 (290 aa).

Position 13–20 (13–20 (GMSGAGKT)) interacts with ATP. 63–66 (DMRS) lines the GTP pocket.

The protein belongs to the RapZ-like family.

Its function is as follows. Displays ATPase and GTPase activities. This is Nucleotide-binding protein LAR_0375 from Limosilactobacillus reuteri subsp. reuteri (strain JCM 1112) (Lactobacillus reuteri).